The following is a 286-amino-acid chain: D-tagatose-1,6-bisphosphate aldolase subunit KbaY (286 aa).

Asp-82 (proton donor) is an active-site residue. Zn(2+)-binding residues include His-83 and His-180. Gly-181 lines the dihydroxyacetone phosphate pocket. His-208 provides a ligand contact to Zn(2+). Residues 209–211 and 230–233 each bind dihydroxyacetone phosphate; these read GAS and NVAT.

It belongs to the class II fructose-bisphosphate aldolase family. TagBP aldolase KbaY subfamily. Homotetramer. Forms a complex with KbaZ. Zn(2+) is required as a cofactor.

It carries out the reaction D-tagatofuranose 1,6-bisphosphate = D-glyceraldehyde 3-phosphate + dihydroxyacetone phosphate. It participates in carbohydrate metabolism; D-tagatose 6-phosphate degradation; D-glyceraldehyde 3-phosphate and glycerone phosphate from D-tagatose 6-phosphate: step 2/2. Functionally, catalytic subunit of the tagatose-1,6-bisphosphate aldolase KbaYZ, which catalyzes the reversible aldol condensation of dihydroxyacetone phosphate (DHAP or glycerone-phosphate) with glyceraldehyde 3-phosphate (G3P) to produce tagatose 1,6-bisphosphate (TBP). Requires KbaZ subunit for full activity and stability. This is D-tagatose-1,6-bisphosphate aldolase subunit KbaY from Escherichia coli O7:K1 (strain IAI39 / ExPEC).